The sequence spans 96 residues: Co-chaperonin GroES (96 aa).

This sequence belongs to the GroES chaperonin family. As to quaternary structure, heptamer of 7 subunits arranged in a ring. Interacts with the chaperonin GroEL.

Its subcellular location is the cytoplasm. Together with the chaperonin GroEL, plays an essential role in assisting protein folding. The GroEL-GroES system forms a nano-cage that allows encapsulation of the non-native substrate proteins and provides a physical environment optimized to promote and accelerate protein folding. GroES binds to the apical surface of the GroEL ring, thereby capping the opening of the GroEL channel. This is Co-chaperonin GroES from Myxococcus xanthus (strain DK1622).